We begin with the raw amino-acid sequence, 201 residues long: ATP-dependent Clp protease proteolytic subunit 2 (201 aa).

The Nucleophile role is filled by S100. The active site involves H125.

It belongs to the peptidase S14 family. In terms of assembly, fourteen ClpP subunits assemble into 2 heptameric rings which stack back to back to give a disk-like structure with a central cavity, resembling the structure of eukaryotic proteasomes.

It localises to the cytoplasm. The catalysed reaction is Hydrolysis of proteins to small peptides in the presence of ATP and magnesium. alpha-casein is the usual test substrate. In the absence of ATP, only oligopeptides shorter than five residues are hydrolyzed (such as succinyl-Leu-Tyr-|-NHMec, and Leu-Tyr-Leu-|-Tyr-Trp, in which cleavage of the -Tyr-|-Leu- and -Tyr-|-Trp bonds also occurs).. Its function is as follows. Cleaves peptides in various proteins in a process that requires ATP hydrolysis. Has a chymotrypsin-like activity. Plays a major role in the degradation of misfolded proteins. The chain is ATP-dependent Clp protease proteolytic subunit 2 from Corynebacterium glutamicum (strain ATCC 13032 / DSM 20300 / JCM 1318 / BCRC 11384 / CCUG 27702 / LMG 3730 / NBRC 12168 / NCIMB 10025 / NRRL B-2784 / 534).